We begin with the raw amino-acid sequence, 278 residues long: Octanoyltransferase LipM (278 aa).

In terms of domain architecture, BPL/LPL catalytic spans 33-248 (KKMPPTIRFY…GFEKGLDVEL (216 aa)). The Acyl-thioester intermediate role is filled by Cys150.

It belongs to the octanoyltransferase LipM family. As to quaternary structure, monomer.

The catalysed reaction is octanoyl-[ACP] + L-lysyl-[protein] = N(6)-octanoyl-L-lysyl-[protein] + holo-[ACP] + H(+). Its pathway is protein modification; protein lipoylation via endogenous pathway; protein N(6)-(lipoyl)lysine from octanoyl-[acyl-carrier-protein]. Catalyzes the transfer of endogenously produced octanoic acid from octanoyl-acyl-carrier-protein onto the lipoyl domain of GcvH, an intermediate carrier during protein lipoylation. The protein is Octanoyltransferase LipM of Bacillus cereus (strain ATCC 14579 / DSM 31 / CCUG 7414 / JCM 2152 / NBRC 15305 / NCIMB 9373 / NCTC 2599 / NRRL B-3711).